The following is a 193-amino-acid chain: Oocyte-secreted protein 3 (193 aa).

The signal sequence occupies residues 1–22 (MKDFVRLQSSFLLCTILTLSEQ). 6 N-linked (GlcNAc...) asparagine glycosylation sites follow: asparagine 64, asparagine 130, asparagine 148, asparagine 151, asparagine 165, and asparagine 178.

Belongs to the PLAC1 family.

The protein resides in the secreted. The chain is Oocyte-secreted protein 3 from Homo sapiens (Human).